Reading from the N-terminus, the 644-residue chain is DNA mismatch repair protein MutL (644 aa).

The interval 336–356 is disordered; it reads KRNINPLNRDDKTKDKSEYQK. Over residues 343–356 the composition is skewed to basic and acidic residues; that stretch reads NRDDKTKDKSEYQK.

The protein belongs to the DNA mismatch repair MutL/HexB family.

Functionally, this protein is involved in the repair of mismatches in DNA. It is required for dam-dependent methyl-directed DNA mismatch repair. May act as a 'molecular matchmaker', a protein that promotes the formation of a stable complex between two or more DNA-binding proteins in an ATP-dependent manner without itself being part of a final effector complex. The chain is DNA mismatch repair protein MutL from Halothermothrix orenii (strain H 168 / OCM 544 / DSM 9562).